A 455-amino-acid polypeptide reads, in one-letter code: CDP-diacylglycerol--serine O-phosphatidyltransferase (455 aa).

PLD phosphodiesterase domains follow at residues 134–160 and 356–383; these read VFGV…NNVY and GDNT…NPRA.

This sequence belongs to the CDP-alcohol phosphatidyltransferase class-II family. In terms of assembly, multimeric.

Its subcellular location is the cytoplasm. It is found in the cell inner membrane. The catalysed reaction is a CDP-1,2-diacyl-sn-glycerol + L-serine = a 1,2-diacyl-sn-glycero-3-phospho-L-serine + CMP + H(+). This is CDP-diacylglycerol--serine O-phosphatidyltransferase (pssA) from Haemophilus influenzae (strain ATCC 51907 / DSM 11121 / KW20 / Rd).